The chain runs to 119 residues: Large ribosomal subunit protein bL20 (119 aa).

It belongs to the bacterial ribosomal protein bL20 family.

Its function is as follows. Binds directly to 23S ribosomal RNA and is necessary for the in vitro assembly process of the 50S ribosomal subunit. It is not involved in the protein synthesizing functions of that subunit. The protein is Large ribosomal subunit protein bL20 of Paracoccus denitrificans (strain Pd 1222).